The following is a 237-amino-acid chain: MQENRPVIALDFPEFSDVKDFLEKFDPSEKLYIKLGMELFYTAGPQVVYYVKSLGHSVFLDLKLHDIPNTVESSMRVLARLGVDMVNVHAAGGVEMMVAAKRGLEAGTPTGRQRPKLIAVTQLTSTSEEIMQNDQKIMTSLEESVINYAQKTAQAGLDGVVCSAHEVEKIKAATSKEFICLTPGIRPEGASKGDQKRVMTPKEARTIGSDYIVVGRPITQAKDPVSAYHAIKEEWNQ.

Residues Asp-11, Lys-34, 61-70 (DLKLHDIPNT), Thr-124, Arg-186, Gln-195, Gly-215, and Arg-216 contribute to the substrate site. Lys-63 acts as the Proton donor in catalysis.

Belongs to the OMP decarboxylase family. Type 1 subfamily. Homodimer.

It carries out the reaction orotidine 5'-phosphate + H(+) = UMP + CO2. The protein operates within pyrimidine metabolism; UMP biosynthesis via de novo pathway; UMP from orotate: step 2/2. Catalyzes the decarboxylation of orotidine 5'-monophosphate (OMP) to uridine 5'-monophosphate (UMP). The chain is Orotidine 5'-phosphate decarboxylase from Lactococcus lactis subsp. cremoris (strain SK11).